Here is an 88-residue protein sequence, read N- to C-terminus: Small ribosomal subunit protein uS15 (88 aa).

Belongs to the universal ribosomal protein uS15 family. As to quaternary structure, part of the 30S ribosomal subunit. Forms a bridge to the 50S subunit in the 70S ribosome, contacting the 23S rRNA.

In terms of biological role, one of the primary rRNA binding proteins, it binds directly to 16S rRNA where it helps nucleate assembly of the platform of the 30S subunit by binding and bridging several RNA helices of the 16S rRNA. Functionally, forms an intersubunit bridge (bridge B4) with the 23S rRNA of the 50S subunit in the ribosome. The polypeptide is Small ribosomal subunit protein uS15 (Leptospira biflexa serovar Patoc (strain Patoc 1 / Ames)).